The chain runs to 169 residues: Transcription antitermination protein NusB (169 aa).

Residues 150-169 (AAATSRRTETAGGESNDAGS) form a disordered region.

It belongs to the NusB family.

Its function is as follows. Involved in transcription antitermination. Required for transcription of ribosomal RNA (rRNA) genes. Binds specifically to the boxA antiterminator sequence of the ribosomal RNA (rrn) operons. This Rhodococcus jostii (strain RHA1) protein is Transcription antitermination protein NusB.